The primary structure comprises 182 residues: ATP-dependent protease subunit HslV (182 aa).

Residue T10 is part of the active site. Residues A166, C169, and S172 each contribute to the Na(+) site.

This sequence belongs to the peptidase T1B family. HslV subfamily. As to quaternary structure, a double ring-shaped homohexamer of HslV is capped on each side by a ring-shaped HslU homohexamer. The assembly of the HslU/HslV complex is dependent on binding of ATP.

It is found in the cytoplasm. It catalyses the reaction ATP-dependent cleavage of peptide bonds with broad specificity.. Its activity is regulated as follows. Allosterically activated by HslU binding. Functionally, protease subunit of a proteasome-like degradation complex believed to be a general protein degrading machinery. The sequence is that of ATP-dependent protease subunit HslV from Rickettsia africae (strain ESF-5).